A 695-amino-acid chain; its full sequence is Elongation factor G (695 aa).

One can recognise a tr-type G domain in the interval 4-279; it reads EKVRNIGISA…AVTQYLPSPL (276 aa). Residues 13–20, 79–83, and 133–136 each bind GTP; these read AHIDSGKT, DTPGH, and NKMD.

This sequence belongs to the TRAFAC class translation factor GTPase superfamily. Classic translation factor GTPase family. EF-G/EF-2 subfamily.

The protein resides in the cytoplasm. In terms of biological role, catalyzes the GTP-dependent ribosomal translocation step during translation elongation. During this step, the ribosome changes from the pre-translocational (PRE) to the post-translocational (POST) state as the newly formed A-site-bound peptidyl-tRNA and P-site-bound deacylated tRNA move to the P and E sites, respectively. Catalyzes the coordinated movement of the two tRNA molecules, the mRNA and conformational changes in the ribosome. The sequence is that of Elongation factor G from Rhodopirellula baltica (strain DSM 10527 / NCIMB 13988 / SH1).